The following is a 291-amino-acid chain: Nucleotide-binding protein jk1004 (291 aa).

16-23 (GMSGAGRR) contributes to the ATP binding site. GTP is bound at residue 67–70 (DVRS).

Belongs to the RapZ-like family.

Its function is as follows. Displays ATPase and GTPase activities. In Corynebacterium jeikeium (strain K411), this protein is Nucleotide-binding protein jk1004.